The following is a 251-amino-acid chain: Small ribosomal subunit protein uS2 (251 aa).

This sequence belongs to the universal ribosomal protein uS2 family.

The sequence is that of Small ribosomal subunit protein uS2 from Synechococcus sp. (strain ATCC 27144 / PCC 6301 / SAUG 1402/1) (Anacystis nidulans).